The sequence spans 260 residues: Carbonic anhydrase (260 aa).

A disordered region spans residues 1–31 (MAHAWGYGPADGPESWAESFPIANGPRQSPI). Residues 3–259 (HAWGYGPADG…LKGRKVRASF (257 aa)) form the Alpha-carbonic anhydrase domain. The active-site Proton acceptor is the His64. Residues His94, His96, and His119 each contribute to the Zn(2+) site. Tyr127 is an active-site residue. Position 198 to 199 (198 to 199 (TT)) interacts with substrate.

This sequence belongs to the alpha-carbonic anhydrase family. The cofactor is Zn(2+).

The catalysed reaction is hydrogencarbonate + H(+) = CO2 + H2O. Its function is as follows. Reversible hydration of carbon dioxide. This chain is Carbonic anhydrase (cahz), found in Danio rerio (Zebrafish).